Consider the following 874-residue polypeptide: Valine--tRNA ligase (874 aa).

The segment at 1–22 (MTENSQQPQPAPSTELPTQYTP) is disordered. The short motif at 57 to 67 (PNVTGSLHLGH) is the 'HIGH' region element. The 'KMSKS' region signature appears at 531-535 (KMSKS). Position 534 (lysine 534) interacts with ATP. Positions 805–871 (VIDFAAERKR…TRITAQLEKL (67 aa)) form a coiled coil.

Belongs to the class-I aminoacyl-tRNA synthetase family. ValS type 1 subfamily. As to quaternary structure, monomer.

It localises to the cytoplasm. The catalysed reaction is tRNA(Val) + L-valine + ATP = L-valyl-tRNA(Val) + AMP + diphosphate. Its function is as follows. Catalyzes the attachment of valine to tRNA(Val). As ValRS can inadvertently accommodate and process structurally similar amino acids such as threonine, to avoid such errors, it has a 'posttransfer' editing activity that hydrolyzes mischarged Thr-tRNA(Val) in a tRNA-dependent manner. The chain is Valine--tRNA ligase from Streptomyces coelicolor (strain ATCC BAA-471 / A3(2) / M145).